A 314-amino-acid polypeptide reads, in one-letter code: Olfactory receptor 5D14 (314 aa).

At 1 to 27 (MMMVLRNLSMEPTFALLGFTDYPKLQI) the chain is on the extracellular side. N7 is a glycosylation site (N-linked (GlcNAc...) asparagine). Residues 28–48 (PLFLVFLLMYVITVVGNLGMI) traverse the membrane as a helical segment. Residues 49–56 (IIIKINPK) lie on the Cytoplasmic side of the membrane. The helical transmembrane segment at 57–77 (FHTPMYFFLSHLSFVDFCYSS) threads the bilayer. The Extracellular portion of the chain corresponds to 78–101 (IVTPKLLENLVMADKSIFYFSCMM). A helical transmembrane segment spans residues 102–122 (QYFLSCTAVVTESFLLAVMAY). The Cytoplasmic segment spans residues 123–141 (DRFVAICNPLLYTVAMSQR). The chain crosses the membrane as a helical span at residues 142 to 162 (LCALLVAGSYLWGMFGPLVLL). Topologically, residues 163–198 (CYALRLNFSGPNVINHFFCEYTALISVSGSDILIPH) are extracellular. N169 carries an N-linked (GlcNAc...) asparagine glycan. Residues 199–219 (LLLFSFATFNEMCTLLIILTS) form a helical membrane-spanning segment. The Cytoplasmic portion of the chain corresponds to 220–239 (YVFIFVTVLKIRSVSGRHKA). Residues 240-260 (FSTWASHLTSITIFHGTILFL) traverse the membrane as a helical segment. The Extracellular portion of the chain corresponds to 261-273 (YCVPNSKNSRQTV). The helical transmembrane segment at 274–294 (KVASVFYTVVNPMLNPLIYSL) threads the bilayer. Residues 295–314 (RNKDVKDAFWKLIHTQVPFH) lie on the Cytoplasmic side of the membrane.

It belongs to the G-protein coupled receptor 1 family.

It is found in the cell membrane. Functionally, odorant receptor. The polypeptide is Olfactory receptor 5D14 (OR5D14) (Homo sapiens (Human)).